The sequence spans 192 residues: Phosphoheptose isomerase (192 aa).

The SIS domain occupies 37-192; that stretch reads LADSFKAGGK…IQLIEKEMEK (156 aa). 52–54 is a binding site for substrate; the sequence is NGG. Zn(2+) is bound by residues histidine 61 and glutamate 65. Substrate contacts are provided by residues glutamate 65, 93–94, 119–121, serine 124, and glutamine 172; these read ND and STS. Zn(2+) contacts are provided by glutamine 172 and histidine 180.

It belongs to the SIS family. GmhA subfamily. In terms of assembly, homotetramer. Zn(2+) is required as a cofactor.

The protein resides in the cytoplasm. The enzyme catalyses 2 D-sedoheptulose 7-phosphate = D-glycero-alpha-D-manno-heptose 7-phosphate + D-glycero-beta-D-manno-heptose 7-phosphate. The protein operates within carbohydrate biosynthesis; D-glycero-D-manno-heptose 7-phosphate biosynthesis; D-glycero-alpha-D-manno-heptose 7-phosphate and D-glycero-beta-D-manno-heptose 7-phosphate from sedoheptulose 7-phosphate: step 1/1. Its function is as follows. Catalyzes the isomerization of sedoheptulose 7-phosphate in D-glycero-D-manno-heptose 7-phosphate. The sequence is that of Phosphoheptose isomerase from Proteus mirabilis (strain HI4320).